The primary structure comprises 213 residues: Methylthioribulose-1-phosphate dehydratase (213 aa).

2 residues coordinate Zn(2+): His97 and His99.

Belongs to the aldolase class II family. MtnB subfamily. In terms of assembly, homotetramer. Zn(2+) is required as a cofactor.

The catalysed reaction is 5-(methylsulfanyl)-D-ribulose 1-phosphate = 5-methylsulfanyl-2,3-dioxopentyl phosphate + H2O. The protein operates within amino-acid biosynthesis; L-methionine biosynthesis via salvage pathway; L-methionine from S-methyl-5-thio-alpha-D-ribose 1-phosphate: step 2/6. Functionally, catalyzes the dehydration of methylthioribulose-1-phosphate (MTRu-1-P) into 2,3-diketo-5-methylthiopentyl-1-phosphate (DK-MTP-1-P). The sequence is that of Methylthioribulose-1-phosphate dehydratase from Geobacillus sp. (strain WCH70).